Reading from the N-terminus, the 108-residue chain is Colipase B (108 aa).

Residues 1-13 form the signal peptide; it reads LALLLVALAVAYA. Residues 14–18 constitute a propeptide, enterostatin, activation peptide; the sequence is VPDPR. Cystine bridges form between C30/C41, C36/C52, C40/C74, C62/C82, and C76/C100. W65 lines the taurodeoxycholate pocket.

It belongs to the colipase family. As to quaternary structure, forms a 1:1 stoichiometric complex with pancreatic lipase. As to expression, expressed by the pancreas.

The protein resides in the secreted. Colipase is a cofactor of pancreatic lipase. It allows the lipase to anchor itself to the lipid-water interface. Without colipase the enzyme is washed off by bile salts, which have an inhibitory effect on the lipase. Its function is as follows. Enterostatin has a biological activity as a satiety signal. The chain is Colipase B (CLPS2) from Equus caballus (Horse).